The chain runs to 338 residues: Purple acid phosphatase 17 (338 aa).

Residues 1-31 (MNSGRRSLMSATASLSLLLCIFTTFVVVSNG) form the signal peptide. Residue aspartate 53 participates in Fe cation binding. Asparagine 61 carries an N-linked (GlcNAc...) asparagine glycan. Fe cation is bound by residues aspartate 86 and tyrosine 89. Position 86 (aspartate 86) interacts with Zn(2+). Asparagine 124 and histidine 218 together coordinate Zn(2+). The Proton donor role is filled by histidine 227. Histidine 253 is a binding site for Zn(2+). Position 253–255 (253–255 (HDH)) interacts with substrate. Histidine 255 contacts Fe cation.

The protein belongs to the metallophosphoesterase superfamily. Purple acid phosphatase family. In terms of assembly, homodimer. The cofactor is Fe cation. It depends on Zn(2+) as a cofactor. Expressed in roots, stems, leaves, flowers and siliques.

It localises to the secreted. It catalyses the reaction a phosphate monoester + H2O = an alcohol + phosphate. It carries out the reaction 2 a phenolic donor + H2O2 = 2 a phenolic radical donor + 2 H2O. With respect to regulation, inhibited by phosphate and molybdate. Its function is as follows. Metallo-phosphoesterase involved in phosphate metabolism. Has a peroxidase activity. This is Purple acid phosphatase 17 (PAP17) from Arabidopsis thaliana (Mouse-ear cress).